Reading from the N-terminus, the 172-residue chain is Ribosome maturation factor RimM (172 aa).

The PRC barrel domain occupies 96–169 (PDEFYDHQLE…AIEIDPPEGL (74 aa)).

This sequence belongs to the RimM family. As to quaternary structure, binds ribosomal protein uS19.

It is found in the cytoplasm. An accessory protein needed during the final step in the assembly of 30S ribosomal subunit, possibly for assembly of the head region. Essential for efficient processing of 16S rRNA. May be needed both before and after RbfA during the maturation of 16S rRNA. It has affinity for free ribosomal 30S subunits but not for 70S ribosomes. The sequence is that of Ribosome maturation factor RimM from Mycolicibacterium vanbaalenii (strain DSM 7251 / JCM 13017 / BCRC 16820 / KCTC 9966 / NRRL B-24157 / PYR-1) (Mycobacterium vanbaalenii).